The chain runs to 141 residues: Large ribosomal subunit protein uL11 (141 aa).

This sequence belongs to the universal ribosomal protein uL11 family. As to quaternary structure, part of the ribosomal stalk of the 50S ribosomal subunit. Interacts with L10 and the large rRNA to form the base of the stalk. L10 forms an elongated spine to which L12 dimers bind in a sequential fashion forming a multimeric L10(L12)X complex. One or more lysine residues are methylated.

Its function is as follows. Forms part of the ribosomal stalk which helps the ribosome interact with GTP-bound translation factors. The chain is Large ribosomal subunit protein uL11 from Nostoc punctiforme (strain ATCC 29133 / PCC 73102).